The following is a 293-amino-acid chain: AKT-interacting protein (293 aa).

Over residues 1–11 (MNPFWSMSTSS) the composition is skewed to polar residues. Residues 1–63 (MNPFWSMSTS…TSPAPAAQST (63 aa)) are disordered. Positions 14–23 (KRSEGEEKTL) are enriched in basic and acidic residues. Ser-30 carries the post-translational modification Phosphoserine. The UBC core domain maps to 74–222 (YLEYSLLAEF…VVDSVQVCTA (149 aa)). Residues 253–265 (MLTQKKKPEEQHN) are compositionally biased toward basic and acidic residues. The interval 253–293 (MLTQKKKPEEQHNKSVHVAGLSWVKPGSVQPFSKEEKTVAT) is disordered.

Belongs to the ubiquitin-conjugating enzyme family. FTS subfamily. In terms of assembly, component of the FTS/Hook/FHIP complex (FHF complex), composed of AKTIP/FTS, FHIP1B, and one or more members of the Hook family of proteins HOOK1, HOOK2, and HOOK3. Interacts directly with HOOK1, HOOK2 and HOOK3. The FHF complex associates with the homotypic vesicular sorting complex (the HOPS complex). Also interacts with AKT1. May interact with FHIP1A.

The protein localises to the cytoplasm. It is found in the cell membrane. Component of the FTS/Hook/FHIP complex (FHF complex). The FHF complex may function to promote vesicle trafficking and/or fusion via the homotypic vesicular protein sorting complex (the HOPS complex). Regulates apoptosis by enhancing phosphorylation and activation of AKT1. Increases release of TNFSF6 via the AKT1/GSK3B/NFATC1 signaling cascade. FHF complex promotes the distribution of AP-4 complex to the perinuclear area of the cell. The polypeptide is AKT-interacting protein (AKTIP) (Pongo abelii (Sumatran orangutan)).